A 649-amino-acid polypeptide reads, in one-letter code: Outer dense fiber protein 2 (649 aa).

The segment at 1–65 (MKNRSPSPPL…TKVPWIPPGK (65 aa)) is disordered. Coiled coils occupy residues 137-219 (QKRE…AETD), 247-426 (DINL…LEML), and 464-649 (EVAV…NCAL). Positions 339-358 (SEVSKSIESTKAHLQGQLRT) are disordered.

The protein belongs to the ODF2 family. Self-associates. Associates with microtubules and forms a fibrillar structure partially linked to the microtubule network.

The protein localises to the cytoplasm. It is found in the cytoskeleton. Its subcellular location is the microtubule organizing center. It localises to the centrosome. The protein resides in the cell projection. The protein localises to the cilium. It is found in the centriole. Its subcellular location is the spindle pole. It localises to the flagellum. Its function is as follows. Seems to be a major form of sperm tail outer dense fibers. This is Outer dense fiber protein 2 (odf2) from Xenopus laevis (African clawed frog).